The chain runs to 161 residues: MADIKASIDRKANRRGAARLAAVQALYQMEIGGAGINDVFAEFDSHWLGNEVEGDRYLPAEAAFFRDVVAGVVRDQVRIDPLIDDALSKSWPLKRVAAILRAVLRAGSYELEHRKDVPARVVVSEYVDVAHAFVEKDEAGMVNAVLDQIARRFRTGEFARG.

This sequence belongs to the NusB family.

Functionally, involved in transcription antitermination. Required for transcription of ribosomal RNA (rRNA) genes. Binds specifically to the boxA antiterminator sequence of the ribosomal RNA (rrn) operons. The sequence is that of Transcription antitermination protein NusB from Nitrobacter winogradskyi (strain ATCC 25391 / DSM 10237 / CIP 104748 / NCIMB 11846 / Nb-255).